We begin with the raw amino-acid sequence, 278 residues long: MSRSSPEQLSRFLAEVHGRPKKGLSQNFLIDGNILRKILAVSCVQAGDWVLEIGPGFGALTEVLVNQGAHVVALEKDSMLEETLKQLPIHLEITDACKYPLSQLQDQGWQGKGRVVANLPYHITTPLLRKLFLEAPNQWKTVTVMIQDEVARRITAQPGGKEYGSLTIFLQFFVDVHYAFKVSPGCFLPKPQVASAVVHMTVKENFPLEEPLRTKFFSLTRAAFGQRRKLLANALKDLYPKERVFEALSQLHFSDKTRPETLSLDDYLKLFYLLSLPA.

6 residues coordinate S-adenosyl-L-methionine: N27, L29, G54, E75, D95, and N118.

It belongs to the class I-like SAM-binding methyltransferase superfamily. rRNA adenine N(6)-methyltransferase family. RsmA subfamily.

Its subcellular location is the cytoplasm. The catalysed reaction is adenosine(1518)/adenosine(1519) in 16S rRNA + 4 S-adenosyl-L-methionine = N(6)-dimethyladenosine(1518)/N(6)-dimethyladenosine(1519) in 16S rRNA + 4 S-adenosyl-L-homocysteine + 4 H(+). Its function is as follows. Specifically dimethylates two adjacent adenosines (A1518 and A1519) in the loop of a conserved hairpin near the 3'-end of 16S rRNA in the 30S particle. May play a critical role in biogenesis of 30S subunits. This is Ribosomal RNA small subunit methyltransferase A from Chlamydia abortus (strain DSM 27085 / S26/3) (Chlamydophila abortus).